The sequence spans 215 residues: N-(5'-phosphoribosyl)anthranilate isomerase (215 aa).

The protein belongs to the TrpF family.

It carries out the reaction N-(5-phospho-beta-D-ribosyl)anthranilate = 1-(2-carboxyphenylamino)-1-deoxy-D-ribulose 5-phosphate. It participates in amino-acid biosynthesis; L-tryptophan biosynthesis; L-tryptophan from chorismate: step 3/5. The polypeptide is N-(5'-phosphoribosyl)anthranilate isomerase (Paracoccus denitrificans (strain Pd 1222)).